The sequence spans 486 residues: Cardiolipin synthase A (486 aa).

Transmembrane regions (helical) follow at residues 3–23 and 38–58; these read TFYT…IAGV and MAWL…YLSV. 2 PLD phosphodiesterase domains span residues 219–246 and 399–426; these read MDLR…VDPR and EGGL…DMRS. Catalysis depends on residues His224, Lys226, Asp231, His404, Lys406, and Asp411.

Belongs to the phospholipase D family. Cardiolipin synthase subfamily. ClsA sub-subfamily.

It localises to the cell inner membrane. The catalysed reaction is 2 a 1,2-diacyl-sn-glycero-3-phospho-(1'-sn-glycerol) = a cardiolipin + glycerol. In terms of biological role, catalyzes the reversible phosphatidyl group transfer from one phosphatidylglycerol molecule to another to form cardiolipin (CL) (diphosphatidylglycerol) and glycerol. In Salmonella gallinarum (strain 287/91 / NCTC 13346), this protein is Cardiolipin synthase A.